Reading from the N-terminus, the 669-residue chain is DNA ligase (669 aa).

NAD(+) is bound by residues 34-38, 83-84, and Glu114; these read DAEYD and SL. Lys116 serves as the catalytic N6-AMP-lysine intermediate. Arg137, Glu171, Lys287, and Lys311 together coordinate NAD(+). Positions 405, 408, 423, and 428 each coordinate Zn(2+). The region spanning 591 to 669 is the BRCT domain; it reads NVESYFAGKT…EERFLQELNK (79 aa).

This sequence belongs to the NAD-dependent DNA ligase family. LigA subfamily. It depends on Mg(2+) as a cofactor. Mn(2+) serves as cofactor.

The catalysed reaction is NAD(+) + (deoxyribonucleotide)n-3'-hydroxyl + 5'-phospho-(deoxyribonucleotide)m = (deoxyribonucleotide)n+m + AMP + beta-nicotinamide D-nucleotide.. DNA ligase that catalyzes the formation of phosphodiester linkages between 5'-phosphoryl and 3'-hydroxyl groups in double-stranded DNA using NAD as a coenzyme and as the energy source for the reaction. It is essential for DNA replication and repair of damaged DNA. The protein is DNA ligase of Bacillus cereus (strain AH820).